The primary structure comprises 441 residues: Apolipoprotein N-acyltransferase (441 aa).

The next 7 membrane-spanning stretches (helical) occupy residues 23 to 43 (IIFK…SIYL), 45 to 65 (FFEN…GLVL), 75 to 95 (YFWI…LSSI), 97 to 117 (FNLN…YGLL), 133 to 153 (GIFC…WGIF), 156 to 176 (YGFF…AYFI), and 178 to 198 (EGYI…FSGF). The 227-residue stretch at 215 to 441 (INTNISQDQK…LSKEIFNDKK (227 aa)) folds into the CN hydrolase domain. The active-site Proton acceptor is Glu-256. Lys-310 is an active-site residue. Cys-359 serves as the catalytic Nucleophile.

It belongs to the CN hydrolase family. Apolipoprotein N-acyltransferase subfamily.

Its subcellular location is the cell inner membrane. The enzyme catalyses N-terminal S-1,2-diacyl-sn-glyceryl-L-cysteinyl-[lipoprotein] + a glycerophospholipid = N-acyl-S-1,2-diacyl-sn-glyceryl-L-cysteinyl-[lipoprotein] + a 2-acyl-sn-glycero-3-phospholipid + H(+). Its pathway is protein modification; lipoprotein biosynthesis (N-acyl transfer). In terms of biological role, catalyzes the phospholipid dependent N-acylation of the N-terminal cysteine of apolipoprotein, the last step in lipoprotein maturation. This Campylobacter jejuni subsp. jejuni serotype O:2 (strain ATCC 700819 / NCTC 11168) protein is Apolipoprotein N-acyltransferase.